The primary structure comprises 200 residues: Recombination protein RecR (200 aa).

The C4-type zinc-finger motif lies at 58–73 (CEVCHNLAEEGLCAIC). A Toprim domain is found at 81-176 (GLICVVEEPV…DISRLAYGMP (96 aa)).

The protein belongs to the RecR family.

Functionally, may play a role in DNA repair. It seems to be involved in an RecBC-independent recombinational process of DNA repair. It may act with RecF and RecO. This is Recombination protein RecR from Magnetococcus marinus (strain ATCC BAA-1437 / JCM 17883 / MC-1).